The following is a 291-amino-acid chain: 4-hydroxy-tetrahydrodipicolinate synthase (291 aa).

Threonine 44 is a pyruvate binding site. Tyrosine 132 acts as the Proton donor/acceptor in catalysis. The Schiff-base intermediate with substrate role is filled by lysine 160. Position 202 (isoleucine 202) interacts with pyruvate.

It belongs to the DapA family. Homotetramer; dimer of dimers.

It is found in the cytoplasm. It carries out the reaction L-aspartate 4-semialdehyde + pyruvate = (2S,4S)-4-hydroxy-2,3,4,5-tetrahydrodipicolinate + H2O + H(+). It functions in the pathway amino-acid biosynthesis; L-lysine biosynthesis via DAP pathway; (S)-tetrahydrodipicolinate from L-aspartate: step 3/4. Functionally, catalyzes the condensation of (S)-aspartate-beta-semialdehyde [(S)-ASA] and pyruvate to 4-hydroxy-tetrahydrodipicolinate (HTPA). The polypeptide is 4-hydroxy-tetrahydrodipicolinate synthase (Sphingopyxis alaskensis (strain DSM 13593 / LMG 18877 / RB2256) (Sphingomonas alaskensis)).